A 108-amino-acid polypeptide reads, in one-letter code: L-rhamnose mutarotase (108 aa).

Y19 contributes to the substrate binding site. The Proton donor role is filled by H23. Residues Y45 and 80–81 (WW) each bind substrate.

Belongs to the rhamnose mutarotase family. In terms of assembly, homodimer.

The protein localises to the cytoplasm. The enzyme catalyses alpha-L-rhamnose = beta-L-rhamnose. The protein operates within carbohydrate metabolism; L-rhamnose metabolism. Involved in the anomeric conversion of L-rhamnose. The protein is L-rhamnose mutarotase of Ligilactobacillus salivarius (strain UCC118) (Lactobacillus salivarius).